The primary structure comprises 264 residues: Phosphonoacetaldehyde hydrolase (264 aa).

The active-site Nucleophile is aspartate 9. Residues aspartate 9 and alanine 11 each coordinate Mg(2+). The active-site Schiff-base intermediate with substrate is lysine 50. Aspartate 183 serves as a coordination point for Mg(2+).

The protein belongs to the HAD-like hydrolase superfamily. PhnX family. Homodimer. The cofactor is Mg(2+).

The catalysed reaction is phosphonoacetaldehyde + H2O = acetaldehyde + phosphate + H(+). In terms of biological role, involved in phosphonate degradation. The protein is Phosphonoacetaldehyde hydrolase of Bacillus cereus (strain B4264).